The chain runs to 262 residues: Hydroxyethylthiazole kinase (262 aa).

Met50 is a substrate binding site. 2 residues coordinate ATP: Arg125 and Thr171. Substrate is bound at residue Gly198.

Belongs to the Thz kinase family. Mg(2+) is required as a cofactor.

It carries out the reaction 5-(2-hydroxyethyl)-4-methylthiazole + ATP = 4-methyl-5-(2-phosphooxyethyl)-thiazole + ADP + H(+). Its pathway is cofactor biosynthesis; thiamine diphosphate biosynthesis; 4-methyl-5-(2-phosphoethyl)-thiazole from 5-(2-hydroxyethyl)-4-methylthiazole: step 1/1. Catalyzes the phosphorylation of the hydroxyl group of 4-methyl-5-beta-hydroxyethylthiazole (THZ). This Escherichia coli O7:K1 (strain IAI39 / ExPEC) protein is Hydroxyethylthiazole kinase.